We begin with the raw amino-acid sequence, 363 residues long: Peptide chain release factor 1 (363 aa).

An N5-methylglutamine modification is found at Gln237.

The protein belongs to the prokaryotic/mitochondrial release factor family. In terms of processing, methylated by PrmC. Methylation increases the termination efficiency of RF1.

It is found in the cytoplasm. Functionally, peptide chain release factor 1 directs the termination of translation in response to the peptide chain termination codons UAG and UAA. The chain is Peptide chain release factor 1 from Mesoplasma florum (strain ATCC 33453 / NBRC 100688 / NCTC 11704 / L1) (Acholeplasma florum).